A 66-amino-acid chain; its full sequence is Large ribosomal subunit protein bL35 (66 aa).

It belongs to the bacterial ribosomal protein bL35 family.

The chain is Large ribosomal subunit protein bL35 from Treponema pallidum (strain Nichols).